We begin with the raw amino-acid sequence, 445 residues long: DDB1- and CUL4-associated factor 13 (445 aa).

An N6-acetyllysine modification is found at Lys-49. WD repeat units lie at residues 64–104, 107–146, 149–191, 194–234, 236–276, 280–319, and 323–362; these read GHRD…CIRT, AHEG…YGDE, PLHT…PVCS, WGFD…PLKK, ILDM…TPVM, DHVS…SREV, and KRMQ…KLGV. The required for nucleolar location stretch occupies residues 353–441; the sequence is KANASEKLGV…IVSEKKKHVV (89 aa).

The protein belongs to the WD repeat DCAF13/WDSOF1 family. In terms of assembly, part of the small subunit (SSU) processome, composed of more than 70 proteins and the RNA chaperone small nucleolar RNA (snoRNA) U3. Component of the DCX(DCAF13) E3 ubiquitin ligase complex, at least composed of CUL4 (CUL4A or CUL4B), DDB1, DCAF13 and RBX1. Interacts (via WD40 domain) with DDB1. Interacts with ESR1 and LATS1.

The protein localises to the nucleus. It localises to the nucleolus. The protein operates within protein modification; protein ubiquitination. Its function is as follows. Part of the small subunit (SSU) processome, first precursor of the small eukaryotic ribosomal subunit. During the assembly of the SSU processome in the nucleolus, many ribosome biogenesis factors, an RNA chaperone and ribosomal proteins associate with the nascent pre-rRNA and work in concert to generate RNA folding, modifications, rearrangements and cleavage as well as targeted degradation of pre-ribosomal RNA by the RNA exosome. Participates in the 18S rRNA processing in growing oocytes, being essential for oocyte nonsurrounded nucleolus (NSN) to surrounded nucleolus (SN) transition. Functionally, substrate-recognition component of a DCX (DDB1-CUL4-X-box) E3 ubiquitin-protein ligase complex that plays a key role in embryo preimplantation and is required for normal meiotic cycle progression in oocytes. Acts as a maternal factor that regulates oocyte and zygotic chromatin tightness during maternal to zygotic transition. Also involved in the transformation of the endometrium into the decidua, known as decidualization, providing a solid foundation for implantation of blastocysts. Recognizes the histone methyltransferases SUV39H1 and SUV39H2 and directs them to polyubiquitination and proteasomal degradation, which facilitates the H3K9me3 removal and early zygotic gene expression, essential steps for progressive genome reprogramming and the establishment of pluripotency during preimplantation embryonic development. Supports the spindle assembly and chromosome condensation during oocyte meiotic division by targeting the polyubiquitination and degradation of PTEN, a lipid phosphatase that inhibits PI3K pathway as well as oocyte growth and maturation. Targets PMP22 for polyubiquitination and proteasomal degradation. This is DDB1- and CUL4-associated factor 13 (DCAF13) from Pongo abelii (Sumatran orangutan).